The chain runs to 192 residues: Pyridoxal 5'-phosphate synthase subunit PdxT (192 aa).

Residue 47–49 coordinates L-glutamine; it reads GES. Cysteine 79 acts as the Nucleophile in catalysis. Residues arginine 106 and 134 to 135 each bind L-glutamine; that span reads IR. Catalysis depends on charge relay system residues histidine 170 and glutamate 172.

This sequence belongs to the glutaminase PdxT/SNO family. As to quaternary structure, in the presence of PdxS, forms a dodecamer of heterodimers. Only shows activity in the heterodimer.

The enzyme catalyses aldehydo-D-ribose 5-phosphate + D-glyceraldehyde 3-phosphate + L-glutamine = pyridoxal 5'-phosphate + L-glutamate + phosphate + 3 H2O + H(+). The catalysed reaction is L-glutamine + H2O = L-glutamate + NH4(+). It participates in cofactor biosynthesis; pyridoxal 5'-phosphate biosynthesis. In terms of biological role, catalyzes the hydrolysis of glutamine to glutamate and ammonia as part of the biosynthesis of pyridoxal 5'-phosphate. The resulting ammonia molecule is channeled to the active site of PdxS. In Geobacillus sp. (strain WCH70), this protein is Pyridoxal 5'-phosphate synthase subunit PdxT.